A 911-amino-acid chain; its full sequence is Valine--tRNA ligase (911 aa).

The 'HIGH' region motif lies at 57–67 (PTVSGSLHVGH). Positions 599 to 603 (KMSKS) match the 'KMSKS' region motif. Lys-602 is an ATP binding site. A disordered region spans residues 882-911 (EESAAEDAPETEVAVEASELGEPPVKKPKH).

It belongs to the class-I aminoacyl-tRNA synthetase family. ValS type 2 subfamily. As to quaternary structure, monomer.

It localises to the cytoplasm. It carries out the reaction tRNA(Val) + L-valine + ATP = L-valyl-tRNA(Val) + AMP + diphosphate. Its function is as follows. Catalyzes the attachment of valine to tRNA(Val). As ValRS can inadvertently accommodate and process structurally similar amino acids such as threonine, to avoid such errors, it has a 'posttransfer' editing activity that hydrolyzes mischarged Thr-tRNA(Val) in a tRNA-dependent manner. The protein is Valine--tRNA ligase of Bifidobacterium longum subsp. infantis (strain ATCC 15697 / DSM 20088 / JCM 1222 / NCTC 11817 / S12).